A 29-amino-acid chain; its full sequence is uncharacterized protein (29 aa).

A helical transmembrane segment spans residues 8–28; the sequence is FALIVVLFILLIIVGTAFVGG.

Belongs to the SscA family.

The protein localises to the membrane. This is an uncharacterized protein from Bacillus subtilis (strain 168).